A 616-amino-acid chain; its full sequence is Methionine--tRNA ligase, chloroplastic/mitochondrial (616 aa).

Residues 78–88 carry the 'HIGH' region motif; sequence YYVNAPPHMGS. A 'KMSKS' region motif is present at residues 366–370; sequence KMGKS. Lys-369 provides a ligand contact to ATP. Over residues 582–593 the composition is skewed to basic and acidic residues; sequence LNPEKEEDEKKP. Residues 582–602 are disordered; sequence LNPEKEEDEKKPKVGKKTGKA.

This sequence belongs to the class-I aminoacyl-tRNA synthetase family.

Its subcellular location is the plastid. It localises to the chloroplast. The protein resides in the mitochondrion. It carries out the reaction tRNA(Met) + L-methionine + ATP = L-methionyl-tRNA(Met) + AMP + diphosphate. In Arabidopsis thaliana (Mouse-ear cress), this protein is Methionine--tRNA ligase, chloroplastic/mitochondrial.